A 132-amino-acid polypeptide reads, in one-letter code: Small ribosomal subunit protein uS12 (132 aa).

Position 89 is a 3-methylthioaspartic acid (Asp-89). The segment at 103–132 (DTSGVADRRQSRSKYGAKQPKEGGAAKGKK) is disordered.

This sequence belongs to the universal ribosomal protein uS12 family. In terms of assembly, part of the 30S ribosomal subunit. Contacts proteins S8 and S17. May interact with IF1 in the 30S initiation complex.

Functionally, with S4 and S5 plays an important role in translational accuracy. Interacts with and stabilizes bases of the 16S rRNA that are involved in tRNA selection in the A site and with the mRNA backbone. Located at the interface of the 30S and 50S subunits, it traverses the body of the 30S subunit contacting proteins on the other side and probably holding the rRNA structure together. The combined cluster of proteins S8, S12 and S17 appears to hold together the shoulder and platform of the 30S subunit. This is Small ribosomal subunit protein uS12 from Chlorobium phaeovibrioides (strain DSM 265 / 1930) (Prosthecochloris vibrioformis (strain DSM 265)).